Reading from the N-terminus, the 577-residue chain is MNIQALLSEKVRQAMIAAGAPADCEPQVRQSAKVQFGDYQANGMMAVAKKLGMAPRQLAEQVLTHLDLNGIASKVEIAGPGFINIFLDPAFLAEHVQQALASDRLGVATPEKQTIVVDYSAPNVAKEMHVGHLRSTIIGDAAVRTLEFLGHKVIRANHVGDWGTQFGMLIAWLEKQQQENAGEMELADLEGFYRDAKKHYDEDEEFAERARNYVVKLQSGDEYFREMWRKLVDITMTQNQITYDRLNVTLTRDDVMGESLYNPMLPGIVADLKAKGLAVESEGATVVFLDEFKNKEGEPMGVIIQKKDGGYLYTTTDIACAKYRYETLHADRVLYYIDSRQHQHLMQAWAIVRKAGYVPESVPLEHHMFGMMLGKDGKPFKTRAGGTVKLADLLDEALERARRLVAEKNPDMPADELEKLANAVGIGAVKYADLSKNRTTDYIFDWDNMLAFEGNTAPYMQYAYTRVLSVFRKAEINEEQLAAAPVIIREDREAQLAARLLQFEETLTVVAREGTPHVMCAYLYDLAGLFSGFYEHCPILSAENEEVRNSRLKLAQLTAKTLKLGLDTLGIETVERM.

The short motif at 122-132 (PNVAKEMHVGH) is the 'HIGH' region element.

This sequence belongs to the class-I aminoacyl-tRNA synthetase family. Monomer.

The protein resides in the cytoplasm. The enzyme catalyses tRNA(Arg) + L-arginine + ATP = L-arginyl-tRNA(Arg) + AMP + diphosphate. This chain is Arginine--tRNA ligase, found in Escherichia coli (strain ATCC 8739 / DSM 1576 / NBRC 3972 / NCIMB 8545 / WDCM 00012 / Crooks).